The primary structure comprises 198 residues: Recombination protein RecR (198 aa).

The C4-type zinc-finger motif lies at 57–72 (CEKCNTFTEAQICEVC). Residues 80–175 (TLLCVVETPA…AVTRLARGVP (96 aa)) form the Toprim domain.

Belongs to the RecR family.

In terms of biological role, may play a role in DNA repair. It seems to be involved in an RecBC-independent recombinational process of DNA repair. It may act with RecF and RecO. The chain is Recombination protein RecR from Paraburkholderia phytofirmans (strain DSM 17436 / LMG 22146 / PsJN) (Burkholderia phytofirmans).